The following is a 313-amino-acid chain: Ribosomal RNA small subunit methyltransferase H (313 aa).

Residues 37–39 (GGH), Asp-57, Phe-83, Asp-104, and Gln-111 contribute to the S-adenosyl-L-methionine site.

This sequence belongs to the methyltransferase superfamily. RsmH family.

It localises to the cytoplasm. The catalysed reaction is cytidine(1402) in 16S rRNA + S-adenosyl-L-methionine = N(4)-methylcytidine(1402) in 16S rRNA + S-adenosyl-L-homocysteine + H(+). Specifically methylates the N4 position of cytidine in position 1402 (C1402) of 16S rRNA. This is Ribosomal RNA small subunit methyltransferase H from Mycoplasmoides gallisepticum (strain R(low / passage 15 / clone 2)) (Mycoplasma gallisepticum).